The sequence spans 60 residues: Phospholipase A2 (60 aa).

The Ca(2+) site is built by tyrosine 27, glycine 29, and glycine 31. Residues cysteine 28 and cysteine 44 are joined by a disulfide bond. Histidine 47 is a catalytic residue. Aspartate 48 is a binding site for Ca(2+).

Ca(2+) serves as cofactor. In terms of tissue distribution, expressed by the venom gland.

It is found in the secreted. It catalyses the reaction a 1,2-diacyl-sn-glycero-3-phosphocholine + H2O = a 1-acyl-sn-glycero-3-phosphocholine + a fatty acid + H(+). Its function is as follows. Snake venom phospholipase A2 (PLA2) that displays mild but significant inhibition of mouse platelet aggregation induced by ADP and collagen. In vivo, induces edema in the foot pads and gastrocnemius muscles of mice but shows no myonecrotic or myotoxic activity. PA2 catalyzes the calcium-dependent hydrolysis of the 2-acyl groups in 3-sn-phosphoglycerides. This Lachesis muta rhombeata (Bushmaster) protein is Phospholipase A2.